We begin with the raw amino-acid sequence, 536 residues long: Glycine-rich extracellular protein 1 (536 aa).

Positions 1 to 22 (MGAWAFPAALFLLCLTSESLQG) are cleaved as a signal peptide. 3 disordered regions span residues 111–134 (AQNGFGPGFGGGGKPQKPGPTTQN), 306–336 (GAGEGMKPQKPGLRGTLKPQKSGHGHENGPW), and 500–536 (GDEYAEARSQPGGPDVKRGSNGQLGNGYGGRCPLGKC). Positions 115–124 (FGPGFGGGGK) are enriched in gly residues. Residues 521–536 (GQLGNGYGGRCPLGKC) show a composition bias toward gly residues.

The sequence is that of Glycine-rich extracellular protein 1 from Homo sapiens (Human).